Here is a 432-residue protein sequence, read N- to C-terminus: Putative D-alanyl-D-alanine carboxypeptidase (432 aa).

Residues 7-25 (ATVLLTFSLSAFAVEYPVL) traverse the membrane as a helical; Signal-anchor segment.

The protein belongs to the peptidase S12 family. YfeW subfamily.

The protein localises to the cell inner membrane. The enzyme catalyses Preferential cleavage: (Ac)2-L-Lys-D-Ala-|-D-Ala. Also transpeptidation of peptidyl-alanyl moieties that are N-acyl substituents of D-alanine.. The chain is Putative D-alanyl-D-alanine carboxypeptidase from Salmonella schwarzengrund (strain CVM19633).